A 417-amino-acid polypeptide reads, in one-letter code: MLTQAPKGTKDILPSEVYKWHYIEKEIAKLCHDFGYKEIRIPVFEHTELFQRGVGDTTDIVQKEMYTFLDKGQRSITLRPEGTAGVVRSYIENGMASLPQPVKLYYNITAYRYENVQKGRYREFHQFGVEAFGAPGPSIDVEIISMVKLFFDRLGIKEISLNINSIGCPVCRAEYNKKLMDYLRPNLSKLCATCNTRFERNPLRIIDCKEESCKKITANAPALVENLCDDCKNHFEGLKAGLENLGIDYKIDKNIVRGLDYYTKTVFEFVSDNIGAQGTVCGGGRYDGLVEACGGKPTPGIGFAMGLERLLMVMENQGIKFPESKKPDIFIAAIGDKANSYAEKMVYELRKEGLSAEKDLMGKSLKAQMKYADKLGAKYSIALGDDEIESGKAVLKNMETGEQKEISLDTLISRLKM.

The protein belongs to the class-II aminoacyl-tRNA synthetase family. Homodimer.

It localises to the cytoplasm. It catalyses the reaction tRNA(His) + L-histidine + ATP = L-histidyl-tRNA(His) + AMP + diphosphate + H(+). This is Histidine--tRNA ligase from Acetivibrio thermocellus (strain ATCC 27405 / DSM 1237 / JCM 9322 / NBRC 103400 / NCIMB 10682 / NRRL B-4536 / VPI 7372) (Clostridium thermocellum).